The chain runs to 407 residues: Serine hydroxymethyltransferase (407 aa).

Residues Leu-120 and 124-126 (GHL) contribute to the (6S)-5,6,7,8-tetrahydrofolate site. At Lys-229 the chain carries N6-(pyridoxal phosphate)lysine.

The protein belongs to the SHMT family. In terms of assembly, homodimer. Pyridoxal 5'-phosphate is required as a cofactor.

It is found in the cytoplasm. It carries out the reaction (6R)-5,10-methylene-5,6,7,8-tetrahydrofolate + glycine + H2O = (6S)-5,6,7,8-tetrahydrofolate + L-serine. Its pathway is one-carbon metabolism; tetrahydrofolate interconversion. The protein operates within amino-acid biosynthesis; glycine biosynthesis; glycine from L-serine: step 1/1. Functionally, catalyzes the reversible interconversion of serine and glycine with tetrahydrofolate (THF) serving as the one-carbon carrier. This reaction serves as the major source of one-carbon groups required for the biosynthesis of purines, thymidylate, methionine, and other important biomolecules. Also exhibits THF-independent aldolase activity toward beta-hydroxyamino acids, producing glycine and aldehydes, via a retro-aldol mechanism. The chain is Serine hydroxymethyltransferase from Deinococcus deserti (strain DSM 17065 / CIP 109153 / LMG 22923 / VCD115).